Consider the following 261-residue polypeptide: MTHQSHAYHMVKPSPWPLTGALSALLMTSGLAMWFHFYSTTLLTLGLLTNTLTMYQWWRDVMREGTYQGHHTPPVQKGLRYGMILFITSEVFFFAGFFWAFYHSSLAPTPQLGGHWPPTGITPLNPLEVPLLNTSVLLASGVSITWAHHSLMENNRNQMIQALLITILLGLYFTLLQASEYFESPFTISDGIYGSTFFVATGFHGLHVIIGSTFLTICLIRQLMFHFTSKHHFGFQAAAWYWHFVDVVWLFLYVSIYWWGS.

Residues 1-15 (MTHQSHAYHMVKPSP) lie on the Mitochondrial matrix side of the membrane. A helical transmembrane segment spans residues 16–34 (WPLTGALSALLMTSGLAMW). Topologically, residues 35–40 (FHFYST) are mitochondrial intermembrane. A helical transmembrane segment spans residues 41–66 (TLLTLGLLTNTLTMYQWWRDVMREGT). The Mitochondrial matrix portion of the chain corresponds to 67–72 (YQGHHT). The chain crosses the membrane as a helical span at residues 73 to 105 (PPVQKGLRYGMILFITSEVFFFAGFFWAFYHSS). Over 106–128 (LAPTPQLGGHWPPTGITPLNPLE) the chain is Mitochondrial intermembrane. Residues 129 to 152 (VPLLNTSVLLASGVSITWAHHSLM) traverse the membrane as a helical segment. At 153–155 (ENN) the chain is on the mitochondrial matrix side. Residues 156–183 (RNQMIQALLITILLGLYFTLLQASEYFE) form a helical membrane-spanning segment. Over 184–190 (SPFTISD) the chain is Mitochondrial intermembrane. The chain crosses the membrane as a helical span at residues 191 to 223 (GIYGSTFFVATGFHGLHVIIGSTFLTICLIRQL). The Mitochondrial matrix segment spans residues 224–232 (MFHFTSKHH). A helical membrane pass occupies residues 233–256 (FGFQAAAWYWHFVDVVWLFLYVSI). Topologically, residues 257–261 (YWWGS) are mitochondrial intermembrane.

It belongs to the cytochrome c oxidase subunit 3 family. In terms of assembly, component of the cytochrome c oxidase (complex IV, CIV), a multisubunit enzyme composed of 14 subunits. The complex is composed of a catalytic core of 3 subunits MT-CO1, MT-CO2 and MT-CO3, encoded in the mitochondrial DNA, and 11 supernumerary subunits COX4I, COX5A, COX5B, COX6A, COX6B, COX6C, COX7A, COX7B, COX7C, COX8 and NDUFA4, which are encoded in the nuclear genome. The complex exists as a monomer or a dimer and forms supercomplexes (SCs) in the inner mitochondrial membrane with NADH-ubiquinone oxidoreductase (complex I, CI) and ubiquinol-cytochrome c oxidoreductase (cytochrome b-c1 complex, complex III, CIII), resulting in different assemblies (supercomplex SCI(1)III(2)IV(1) and megacomplex MCI(2)III(2)IV(2)).

It is found in the mitochondrion inner membrane. The enzyme catalyses 4 Fe(II)-[cytochrome c] + O2 + 8 H(+)(in) = 4 Fe(III)-[cytochrome c] + 2 H2O + 4 H(+)(out). Its function is as follows. Component of the cytochrome c oxidase, the last enzyme in the mitochondrial electron transport chain which drives oxidative phosphorylation. The respiratory chain contains 3 multisubunit complexes succinate dehydrogenase (complex II, CII), ubiquinol-cytochrome c oxidoreductase (cytochrome b-c1 complex, complex III, CIII) and cytochrome c oxidase (complex IV, CIV), that cooperate to transfer electrons derived from NADH and succinate to molecular oxygen, creating an electrochemical gradient over the inner membrane that drives transmembrane transport and the ATP synthase. Cytochrome c oxidase is the component of the respiratory chain that catalyzes the reduction of oxygen to water. Electrons originating from reduced cytochrome c in the intermembrane space (IMS) are transferred via the dinuclear copper A center (CU(A)) of subunit 2 and heme A of subunit 1 to the active site in subunit 1, a binuclear center (BNC) formed by heme A3 and copper B (CU(B)). The BNC reduces molecular oxygen to 2 water molecules using 4 electrons from cytochrome c in the IMS and 4 protons from the mitochondrial matrix. The polypeptide is Cytochrome c oxidase subunit 3 (MT-CO3) (Pan troglodytes (Chimpanzee)).